Consider the following 271-residue polypeptide: Putative phosphoenolpyruvate synthase regulatory protein (271 aa).

Residue 151 to 158 (GVSRSGKT) participates in ADP binding.

Belongs to the pyruvate, phosphate/water dikinase regulatory protein family. PSRP subfamily.

It carries out the reaction [pyruvate, water dikinase] + ADP = [pyruvate, water dikinase]-phosphate + AMP + H(+). The enzyme catalyses [pyruvate, water dikinase]-phosphate + phosphate + H(+) = [pyruvate, water dikinase] + diphosphate. Bifunctional serine/threonine kinase and phosphorylase involved in the regulation of the phosphoenolpyruvate synthase (PEPS) by catalyzing its phosphorylation/dephosphorylation. This is Putative phosphoenolpyruvate synthase regulatory protein from Burkholderia multivorans (strain ATCC 17616 / 249).